The sequence spans 648 residues: Transcription termination factor FttA (648 aa).

The tract at residues 9 to 76 (DDILKEIREI…ISVRPDPDIL (68 aa)) is KHa. The interval 77–144 (LPPEKAEELI…WAPRVVRTPP (68 aa)) is KHb. Residues 185–395 (WIRITGLGGF…LVMESTYGGS (211 aa)) are metallo-beta-lactamase N-terminus. 6 residues coordinate Zn(2+): histidine 253, histidine 255, aspartate 257, histidine 258, histidine 341, and aspartate 364. Positions 396 to 589 (NDYQMPREEA…MEVHTIDGFS (194 aa)) are beta-Casp. The interval 590–648 (GHADRRELMSYVARVRPRPERIITVHGEAHKCLDLSSSIHKKFGISTRAPNNLDAIRLK) is metallo-beta-lactamase C-terminus. Histidine 615 lines the Zn(2+) pocket.

This sequence belongs to the metallo-beta-lactamase superfamily. RNA-metabolizing metallo-beta-lactamase-like family. FttA subfamily. As to quaternary structure, homodimer. Probably interacts transiently with RNA polymerase (RNAP), (via at least the RNAP stalk subunits Rpo4 and Rpo7), interacts transiently with the Spt4-Spt5 complex. Zn(2+) is required as a cofactor.

Transcription termination is stimulated by the Spt4-Spt5 complex. Dipicolinic acid inhibits FttA-mediated termination in vitro and inhibits growth in vivo. Terminates transcription on the whole genome. Termination is linked to FttA-mediated RNA cleavage and does not require NTP hydrolysis. Cleaves endonucleolytically at the RNA exit channel of RNA polymerase (RNAP); the 5'-3' exonuclease activity of this protein degrades the nascent RNA released from RNAP. Functionally, facilitates transcription termination; addition of this factor to stalled transcription elongation complexes (TEC) promotes nascent transcript cleavage and releases RNA polymerase (RNAP) from DNA in vitro. Transcription termination competes with productive transcription elongation. Termination is stimulated by C-rich transcripts and inhibited by G-rich transcripts; the Spt4-Spt5 complex enhances termination on C-less transcripts. Yields an approximately 100 nucleotide RNA, consistent with endonucleolytic cleavage at the RNA exit channel of RNAP. This chain is Transcription termination factor FttA, found in Thermococcus kodakarensis (strain ATCC BAA-918 / JCM 12380 / KOD1) (Pyrococcus kodakaraensis (strain KOD1)).